A 967-amino-acid polypeptide reads, in one-letter code: Protein moonraker (967 aa).

Residues 178-201 (SHPGQSDLTVPNSPPTHDPGLQPH) form a disordered region. A compositionally biased stretch (polar residues) spans 179–188 (HPGQSDLTVP). Phosphoserine is present on residues serine 287 and serine 409. 2 disordered regions span residues 401–431 (ALER…SRPS) and 490–601 (KAGK…SHLT). The span at 525-543 (QSQPHSKSRVQQTTVSSRL) shows a compositional bias: polar residues. The span at 557-568 (WIPPNPTSPPAS) shows a compositional bias: pro residues. Positions 616-642 (AETSKRLKELEELKAKEIDSMQKQRLD) form a coiled coil. Serine 700 and serine 826 each carry phosphoserine. The interval 849 to 872 (RPCNGNSLDESVGTEEGSEKREAP) is disordered. Residues 885 to 967 (GRAPLFVPPG…FTSEFLEAAT (83 aa)) are necessary and sufficient for CEP20-binding.

As to quaternary structure, interacts with CEP63. Interacts with WDR62. Forms a complex with OFD1 and CEP20/FOR20. Interacts with PCM1.

The protein localises to the cytoplasm. The protein resides in the cytoskeleton. It is found in the microtubule organizing center. Its subcellular location is the centrosome. It localises to the centriole. The protein localises to the centriolar satellite. Functionally, involved in centriole duplication. Positively regulates CEP63 centrosomal localization. Required for WDR62 centrosomal localization and promotes the centrosomal localization of CDK2. May play a role in cilium assembly. The sequence is that of Protein moonraker (KIAA0753) from Homo sapiens (Human).